The following is a 143-amino-acid chain: SsrA-binding protein (143 aa).

It belongs to the SmpB family.

It is found in the cytoplasm. In terms of biological role, required for rescue of stalled ribosomes mediated by trans-translation. Binds to transfer-messenger RNA (tmRNA), required for stable association of tmRNA with ribosomes. tmRNA and SmpB together mimic tRNA shape, replacing the anticodon stem-loop with SmpB. tmRNA is encoded by the ssrA gene; the 2 termini fold to resemble tRNA(Ala) and it encodes a 'tag peptide', a short internal open reading frame. During trans-translation Ala-aminoacylated tmRNA acts like a tRNA, entering the A-site of stalled ribosomes, displacing the stalled mRNA. The ribosome then switches to translate the ORF on the tmRNA; the nascent peptide is terminated with the 'tag peptide' encoded by the tmRNA and targeted for degradation. The ribosome is freed to recommence translation, which seems to be the essential function of trans-translation. The protein is SsrA-binding protein of Mycoplasmopsis synoviae (strain 53) (Mycoplasma synoviae).